A 173-amino-acid polypeptide reads, in one-letter code: Small ribosomal subunit protein uS4c (173 aa).

The S4 RNA-binding domain maps to 94 to 155 (SRLDSKIYRS…TKLTSELIEK (62 aa)).

It belongs to the universal ribosomal protein uS4 family. As to quaternary structure, part of the 30S ribosomal subunit. Contacts protein S5. The interaction surface between S4 and S5 is involved in control of translational fidelity.

It localises to the plastid. Its function is as follows. One of the primary rRNA binding proteins, it binds directly to 16S rRNA where it nucleates assembly of the body of the 30S subunit. Functionally, with S5 and S12 plays an important role in translational accuracy. This chain is Small ribosomal subunit protein uS4c (rps4), found in Helicosporidium sp. subsp. Simulium jonesii (Green alga).